A 269-amino-acid chain; its full sequence is Chromophore lyase CRL, chloroplastic (269 aa).

A helical transmembrane segment spans residues 19–36 (ARGLVVKTLVLIGGALLI).

This sequence belongs to the CpcT/CpeT biliprotein lyase family. In terms of tissue distribution, mostly expressed in shoot apices, to a lower extent, in leaves, inflorescence stems, buds and cotyledons, and, at low levels, in roots and siliques.

It is found in the plastid. Its subcellular location is the chloroplast outer membrane. In terms of biological role, covalently attaches a chromophore to Cys residue(s) of phycobiliproteins. Required for plastid division, and involved in cell differentiation and regulation of the cell division plane. Maintenance of plastid homeostasis controls plant preconditioning to stress and stress acclimation. Confers sensitivity to cabbage leaf curl virus (CaLCuV), probably by supporting viral movement. The polypeptide is Chromophore lyase CRL, chloroplastic (CRL) (Arabidopsis thaliana (Mouse-ear cress)).